We begin with the raw amino-acid sequence, 130 residues long: Small ribosomal subunit protein uS9 (130 aa).

This sequence belongs to the universal ribosomal protein uS9 family.

In Shigella sonnei (strain Ss046), this protein is Small ribosomal subunit protein uS9.